A 97-amino-acid polypeptide reads, in one-letter code: Protein RnfH (97 aa).

Belongs to the UPF0125 (RnfH) family.

The protein is Protein RnfH of Paramagnetospirillum magneticum (strain ATCC 700264 / AMB-1) (Magnetospirillum magneticum).